Reading from the N-terminus, the 1129-residue chain is Serine/threonine-protein kinase 11-interacting protein (1129 aa).

8 LRR repeats span residues 107-128 (SLRS…RSVY), 130-150 (QLEV…IALC), 162-183 (VLHT…LELL), 185-206 (SLKI…LKVL), 208-229 (ELQY…SVGN), 232-253 (KLHS…ENLP), 254-275 (NLQH…SGLA), and 279-300 (NLKQ…RALT). 4 disordered regions span residues 335–392 (RLQP…RRGQ), 428–475 (DPEY…HVAP), 654–678 (GDIY…NHTG), and 696–724 (NPTG…GLAA). Positions 337–355 (QPSSSATESSCTGDLTDSY) are enriched in polar residues. Basic residues predominate over residues 365-374 (LPRKKSRVKV). Residues 381-391 (ERSDSEYERRG) show a composition bias toward basic and acidic residues. Over residues 436–447 (HSPPPRASPSPT) the composition is skewed to pro residues. Over residues 448 to 458 (APSSVPKQKSP) the composition is skewed to low complexity.

It belongs to the STK11IP family.

It localises to the cytoplasm. The sequence is that of Serine/threonine-protein kinase 11-interacting protein (stk11ip) from Xenopus tropicalis (Western clawed frog).